The primary structure comprises 715 residues: MVQKYQSPVRVYKHPFELIMAAYERRFPTCPLIPMFVDSDTVSEFKSEDGALHVIERRCKLDIDAPRLLKKIAGVDYVYFVQKNSLNSRDRTLHIEAHNETFSNRVIIHEHCCYTVHPENEDWTCFEQSASLDIKSFFGFESTVEKIAMKHYTSNIKKGKEIIEYYLRQLEEEGITFVPRWTPPPVGPSETCSSSKNQVTSAAVLVPDAAAVMEGLSGENLSSPGTASEPVVGTPDDKLDADYIKRYLGDLTPLQESCLIRLRQWLQETHKGKIPKDEHILRFLRARDFNIDKAREIMCQSLTWRKQHQVDYILDTWTPPQVLLDYYAGGWHHHDKDGRPLYVLRLGQMDTKGLVRALGEEALLRYVLSINEEGLRRCEENTKVFGRPISSWTCLVDLEGLNMRHLWRPGVKALLRIIEVVEANYPETLGRLLILRAPRVFPVLWTLVSPFIDDNTRRKFLIYAGNDYQGPGGLLDYIDKEIIPDFLSGECMCDVPEGGLVPKSLYRTAEELENEDLKLWTETIYQSASVFKGAPHEILIQIVDASSVITWDFDVCKGDIVFNIYHSKRSPQPPKKDSLGAHSITSPGGNNVQLIDKVWQLGRDYSMVESPLICKEGESVQGSHVTRWPGFYILQWKFHTMPACAATNLPRVDDVLASLQVSSHKCKVMYYTEVIGSEDFRGSMTSLESSHSGFSQLSAATTSSSQSQSSSMISR.

The required for interaction and inhibitory function toward RIGI stretch occupies residues 1–510 (MVQKYQSPVR…VPKSLYRTAE (510 aa)). The region spanning 3–175 (QKYQSPVRVY…YLRQLEEEGI (173 aa)) is the PRELI/MSF1 domain. Thr234 carries the post-translational modification Phosphothreonine. A CRAL-TRIO domain is found at 319-495 (PPQVLLDYYA…FLSGECMCDV (177 aa)). Residues 521–674 (TETIYQSASV…KCKVMYYTEV (154 aa)) form the GOLD domain. Residue Ser586 is modified to Phosphoserine.

As to quaternary structure, interacts with RIGI (via tandem CARD domain); the interaction is direct. Interacts (via GOLD domain) with SLC18A3; the interaction is direct. Interacts with SLC5A7 (via GOLD domain); the interaction is direct.

The protein resides in the cytoplasm. The protein localises to the golgi apparatus. In terms of biological role, may play a role in innate immunity by inhibiting the antiviral RIG-I signaling pathway. In this pathway, functions as a negative regulator of RIGI, the cytoplasmic sensor of viral nucleic acids. Prevents the interaction of RIGI with MAVS/IPS1, an important step in signal propagation. May also regulate the SLC18A3 and SLC5A7 cholinergic transporters. This chain is SEC14-like protein 1, found in Mus musculus (Mouse).